The chain runs to 248 residues: Triosephosphate isomerase (248 aa).

K12 contacts substrate. H94 (electrophile) is an active-site residue. The Proton acceptor role is filled by E165.

Belongs to the triosephosphate isomerase family. In terms of assembly, homodimer.

It catalyses the reaction D-glyceraldehyde 3-phosphate = dihydroxyacetone phosphate. It functions in the pathway carbohydrate biosynthesis; gluconeogenesis. The protein operates within carbohydrate degradation; glycolysis; D-glyceraldehyde 3-phosphate from glycerone phosphate: step 1/1. The chain is Triosephosphate isomerase (Tpi) from Bombyx mori (Silk moth).